The chain runs to 184 residues: Peptidyl-tRNA hydrolase (184 aa).

Residue tyrosine 14 coordinates tRNA. Histidine 19 (proton acceptor) is an active-site residue. TRNA is bound by residues phenylalanine 64, asparagine 66, and asparagine 112.

It belongs to the PTH family. Monomer.

It localises to the cytoplasm. It catalyses the reaction an N-acyl-L-alpha-aminoacyl-tRNA + H2O = an N-acyl-L-amino acid + a tRNA + H(+). Functionally, hydrolyzes ribosome-free peptidyl-tRNAs (with 1 or more amino acids incorporated), which drop off the ribosome during protein synthesis, or as a result of ribosome stalling. In terms of biological role, catalyzes the release of premature peptidyl moieties from peptidyl-tRNA molecules trapped in stalled 50S ribosomal subunits, and thus maintains levels of free tRNAs and 50S ribosomes. This Listeria welshimeri serovar 6b (strain ATCC 35897 / DSM 20650 / CCUG 15529 / CIP 8149 / NCTC 11857 / SLCC 5334 / V8) protein is Peptidyl-tRNA hydrolase.